The primary structure comprises 551 residues: Structure-specific endonuclease subunit MUS81 (551 aa).

2 disordered regions span residues 84–131 (HLAS…VGYW) and 229–259 (FRPE…QQRP). The span at 92-107 (APSSPSGKKGASKGPP) shows a compositional bias: low complexity. Ser95 is modified (phosphoserine). Residues 110–131 (VQDSSMPVPTQPQAGSTSVGYW) are compositionally biased toward polar residues. The interaction with BLM stretch occupies residues 124-244 (GSTSVGYWPA…HGEDSAVPEA (121 aa)). Positions 131–230 (WPAQNSGARE…GLSTRHAGFR (100 aa)) are winged helix domain (WHD); critical for endonuclease activity. The segment covering 229–238 (FRPEEHHGED) has biased composition (basic and acidic residues). Residues 270–372 (LLCVDIGETR…HRVYLVEEHG (103 aa)) enclose the ERCC4 domain. Catalysis depends on residues Asp274, Glu277, and Asp307. Mg(2+)-binding residues include Asp274, Glu277, Asp307, Glu333, and Arg334. The tract at residues 471–545 (VREVFARQLM…LSRTLYQLYC (75 aa)) is helix-hairpin-helix (2HhH); involved in DNA recognition and bending.

Belongs to the XPF family. Part of the heterodimeric DNA structure-specific endonuclease complex MUS81-EME1. Part of the heterodimeric DNA structure-specific endonuclease complex MUS81-EME2. Interacts with BLM; may stimulate the endonuclease activity of MUS81. Interacts with SLX4/BTBD12; this interaction is direct and links the MUS81-EME1 complex to SLX4, which may coordinate the action of the structure-specific endonuclease during DNA repair. Interacts with DCLRE1B/Apollo. Interacts with RECQL5; this interaction stimulates mitotic DNA synthesis. Interacts with CHEK2. Mg(2+) is required as a cofactor. As to expression, expressed highly in testis. Expressed also in bone marrow, brain, thymus and to a lesser extent in heart and skeletal muscle, colon, kidney and spleen.

Its subcellular location is the nucleus. It localises to the nucleolus. Catalytic subunit of two functionally distinct, structure-specific, heterodimeric DNA endonucleases MUS81-EME1 and MUS81-EME2 that are involved in the maintenance of genome stability. Both endonucleases have essentially the same substrate specificity though MUS81-EME2 is more active than its MUS81-EME1 counterpart. Both cleave 3'-flaps and nicked Holliday junctions, and exhibit limited endonuclease activity with 5' flaps and nicked double-stranded DNAs. MUS81-EME2 which is active during the replication of DNA is more specifically involved in replication fork processing. Replication forks frequently encounter obstacles to their passage, including DNA base lesions, DNA interstrand cross-links, difficult-to-replicate sequences, transcription bubbles, or tightly bound proteins. One mechanism for the restart of a stalled replication fork involves nucleolytic cleavage mediated by the MUS81-EME2 endonuclease. By acting upon the stalled fork, MUS81-EME2 generates a DNA double-strand break (DSB) that can be repaired by homologous recombination, leading to the restoration of an active fork. MUS81-EME2 could also function in telomere maintenance. MUS81-EME1, on the other hand, is active later in the cell cycle and functions in the resolution of mitotic recombination intermediates including the Holliday junctions, the four-way DNA intermediates that form during homologous recombination. This is Structure-specific endonuclease subunit MUS81 from Mus musculus (Mouse).